Consider the following 270-residue polypeptide: HTH-type transcriptional activator AllS (270 aa).

Residues 4–61 (LDPETLRTFVSVAETGSFSRAAEKLYKTTATISYRIKLLEDNTGVALFSRTTRSVLLT) form the HTH lysR-type domain. Residues 21 to 40 (FSRAAEKLYKTTATISYRIK) constitute a DNA-binding region (H-T-H motif).

It belongs to the LysR transcriptional regulatory family.

In terms of biological role, positive regulator essential for the expression of allD operon. Binds to the allD promoter. This chain is HTH-type transcriptional activator AllS (allS), found in Klebsiella pneumoniae.